A 1103-amino-acid polypeptide reads, in one-letter code: Centrosomal protein of 126 kDa (1103 aa).

The span at 1 to 12 shows a compositional bias: low complexity; the sequence is MLAGRPGAQSAG. A disordered region spans residues 1-36; sequence MLAGRPGAQSAGAGVGAGPPDAPGARDGGGRPRPGA. Coiled-coil stretches lie at residues 43-116 and 182-222; these read HLEK…FQRA and QKHL…KLLE. Disordered stretches follow at residues 380–409 and 723–812; these read NTAE…ESPT and ESKA…PGQS. Over residues 723–735 the composition is skewed to basic and acidic residues; sequence ESKAPVHASDSKT. Residues 736 to 748 are compositionally biased toward basic residues; it reads QKTKPQRGVKFTR. Composition is skewed to polar residues over residues 763–784 and 798–812; these read RKPT…QTQG and NIKS…PGQS.

Interacts with DCTN1.

Its subcellular location is the midbody. The protein localises to the cytoplasm. The protein resides in the cytoskeleton. It is found in the microtubule organizing center. It localises to the centrosome. Its subcellular location is the cilium basal body. Participate in cytokinesis. Necessary for microtubules and mitotic spindle organization. Involved in primary cilium formation. The chain is Centrosomal protein of 126 kDa from Mus musculus (Mouse).